Here is a 179-residue protein sequence, read N- to C-terminus: Large ribosomal subunit protein uL5 (179 aa).

Belongs to the universal ribosomal protein uL5 family. As to quaternary structure, part of the 50S ribosomal subunit; part of the 5S rRNA/L5/L18/L25 subcomplex. Contacts the 5S rRNA and the P site tRNA. Forms a bridge to the 30S subunit in the 70S ribosome.

This is one of the proteins that bind and probably mediate the attachment of the 5S RNA into the large ribosomal subunit, where it forms part of the central protuberance. In the 70S ribosome it contacts protein S13 of the 30S subunit (bridge B1b), connecting the 2 subunits; this bridge is implicated in subunit movement. Contacts the P site tRNA; the 5S rRNA and some of its associated proteins might help stabilize positioning of ribosome-bound tRNAs. This is Large ribosomal subunit protein uL5 from Prochlorococcus marinus (strain AS9601).